Reading from the N-terminus, the 75-residue chain is Kappa-thalatoxin-Tas2a (75 aa).

An N-terminal signal peptide occupies residues 1 to 22 (MKFQMIAAVLLIAFCLSVVVTA). The propeptide occupies 23–40 (RMELQDDEEMKNGSFQKR). The ShKT domain maps to 43 to 75 (CIDTIPKSRCTAFQCKHSMKYRLSFCRKTCGTC). 3 disulfides stabilise this stretch: cysteine 43–cysteine 75, cysteine 52–cysteine 68, and cysteine 57–cysteine 72.

Belongs to the sea anemone type 1 potassium channel toxin family. Type 1a subfamily.

It is found in the secreted. Its subcellular location is the nematocyst. Its function is as follows. Inhibits voltage-gated potassium channels (Kv) with higher potency for Kv1.1/KCNA1 and Kv1.3/KCNA3 (IC(50)=3.4 nM). The protein is Kappa-thalatoxin-Tas2a of Thalassianthus aster (Fuzzy-tipped anemone).